The primary structure comprises 156 residues: MPRRRVIGQRKILPDPKFGSELLAKFVNILMVDGKKSTAESIVYSALETLAQRSGKSELEALEVALENVRPTVEVKSRRVGGSTYQVPVEVRPVRRNALAMRWIVEAARKRGDKSMALRLANELSDAAENKGTAVKKREDVHRMAEANKAFAHYRW.

The protein belongs to the universal ribosomal protein uS7 family. In terms of assembly, part of the 30S ribosomal subunit. Contacts proteins S9 and S11.

One of the primary rRNA binding proteins, it binds directly to 16S rRNA where it nucleates assembly of the head domain of the 30S subunit. Is located at the subunit interface close to the decoding center, probably blocks exit of the E-site tRNA. The chain is Small ribosomal subunit protein uS7 from Shigella dysenteriae serotype 1 (strain Sd197).